The sequence spans 420 residues: Putative competence-damage inducible protein (420 aa).

This sequence belongs to the CinA family.

The chain is Putative competence-damage inducible protein from Halalkalibacterium halodurans (strain ATCC BAA-125 / DSM 18197 / FERM 7344 / JCM 9153 / C-125) (Bacillus halodurans).